The primary structure comprises 202 residues: Guanylate kinase (202 aa).

Positions 3–181 constitute a Guanylate kinase-like domain; sequence GNLFVVAAPS…ALDDLRAVVR (179 aa). 10–17 contacts ATP; the sequence is APSGAGKT.

Belongs to the guanylate kinase family.

It is found in the cytoplasm. The enzyme catalyses GMP + ATP = GDP + ADP. In terms of biological role, essential for recycling GMP and indirectly, cGMP. This chain is Guanylate kinase, found in Dechloromonas aromatica (strain RCB).